Reading from the N-terminus, the 355-residue chain is Sulfate/thiosulfate import ATP-binding protein CysA (355 aa).

The region spanning 3–233 (IIINNVSKQF…PASPFVMGFI (231 aa)) is the ABC transporter domain. ATP is bound at residue 35–42 (GPSGSGKS).

The protein belongs to the ABC transporter superfamily. Sulfate/tungstate importer (TC 3.A.1.6) family. As to quaternary structure, the complex is composed of two ATP-binding proteins (CysA), two transmembrane proteins (CysT and CysW) and a solute-binding protein (CysP).

The protein localises to the cell inner membrane. It carries out the reaction sulfate(out) + ATP + H2O = sulfate(in) + ADP + phosphate + H(+). The enzyme catalyses thiosulfate(out) + ATP + H2O = thiosulfate(in) + ADP + phosphate + H(+). In terms of biological role, part of the ABC transporter complex CysAWTP involved in sulfate/thiosulfate import. Responsible for energy coupling to the transport system. This is Sulfate/thiosulfate import ATP-binding protein CysA from Synechocystis sp. (strain ATCC 27184 / PCC 6803 / Kazusa).